The following is a 283-amino-acid chain: Endochitinase At2g43620 (283 aa).

The first 28 residues, 1–28, serve as a signal peptide directing secretion; that stretch reads MATLRAMLKNAFILFLFTLTIMAKTVFS. Residues 29–66 enclose the Chitin-binding type-1 domain; it reads QQCGTTGCAANLCCSRYGYCGTTDAYCGTGCRSGPCSS. Cystine bridges form between cysteine 31-cysteine 42, cysteine 36-cysteine 48, cysteine 41-cysteine 55, and cysteine 59-cysteine 64. Residues 88-283 are catalytic; the sequence is DTIENVVTPA…GITPGANLSC (196 aa). Catalysis depends on glutamate 150, which acts as the Proton donor. N-linked (GlcNAc...) asparagine glycosylation is present at asparagine 280.

Belongs to the glycosyl hydrolase 19 family. Chitinase class I subfamily.

It carries out the reaction Random endo-hydrolysis of N-acetyl-beta-D-glucosaminide (1-&gt;4)-beta-linkages in chitin and chitodextrins.. This chain is Endochitinase At2g43620, found in Arabidopsis thaliana (Mouse-ear cress).